Here is a 270-residue protein sequence, read N- to C-terminus: tRNA pseudouridine synthase A (270 aa).

Asp51 (nucleophile) is an active-site residue. Tyr109 is a substrate binding site.

It belongs to the tRNA pseudouridine synthase TruA family. As to quaternary structure, homodimer.

It catalyses the reaction uridine(38/39/40) in tRNA = pseudouridine(38/39/40) in tRNA. Formation of pseudouridine at positions 38, 39 and 40 in the anticodon stem and loop of transfer RNAs. This is tRNA pseudouridine synthase A from Burkholderia thailandensis (strain ATCC 700388 / DSM 13276 / CCUG 48851 / CIP 106301 / E264).